The sequence spans 495 residues: tRNA-guanine(15) transglycosylase (495 aa).

The active-site Nucleophile is D83. Residue D118 participates in substrate binding. 2 residues coordinate Zn(2+): C273 and C278.

This sequence belongs to the archaeosine tRNA-ribosyltransferase family. Zn(2+) serves as cofactor.

The catalysed reaction is guanosine(15) in tRNA + 7-cyano-7-deazaguanine = 7-cyano-7-carbaguanosine(15) in tRNA + guanine. Its pathway is tRNA modification; archaeosine-tRNA biosynthesis. Its function is as follows. Exchanges the guanine residue with 7-cyano-7-deazaguanine (preQ0) at position 15 in the dihydrouridine loop (D-loop) of archaeal tRNAs. This Pyrobaculum aerophilum (strain ATCC 51768 / DSM 7523 / JCM 9630 / CIP 104966 / NBRC 100827 / IM2) protein is tRNA-guanine(15) transglycosylase.